A 291-amino-acid chain; its full sequence is MKIAILSRNSKLYSTRRLIEAGRTRGHTVRILDPLRCYMRIAADGFSLHYKGKPITGFDAVIPRIGASVTRYGTAVLRQLEFMGTYTPNPSDAILRSRDKLRAHQLLASQGIDMPVTVFGDNPDDTQDLLSMLGPPPHVVKLNEGAQGAGVILTEKASASRGVVEALRGLYANFIVQEFIGEAEGADLRCFVVGDRVVAAMRRQAADGDFRSNLHLGGTAAMAEASPQEQDVAVRSARALGLAVAGVDLIRSQRGPLVLEVNSTPGLEGVEGVCGVDVAGTIIQHLEQAIR.

An ATP-grasp domain is found at 104–287; that stretch reads HQLLASQGID…VAGTIIQHLE (184 aa). ATP contacts are provided by residues K141, 178–179, D187, and 211–213; these read EF and RSN. Positions 248, 260, and 262 each coordinate Mg(2+). 3 residues coordinate Mn(2+): D248, E260, and N262.

This sequence belongs to the RimK family. The cofactor is Mg(2+). Mn(2+) is required as a cofactor.

The polypeptide is Probable alpha-L-glutamate ligase (Xanthomonas campestris pv. campestris (strain 8004)).